The following is a 692-amino-acid chain: Elongation factor G (692 aa).

Positions 8–282 (AKTRNIGIMA…AVIDYLPSPL (275 aa)) constitute a tr-type G domain. Residues 17–24 (AHVDAGKT), 81–85 (DTPGH), and 135–138 (NKMD) each bind GTP.

Belongs to the TRAFAC class translation factor GTPase superfamily. Classic translation factor GTPase family. EF-G/EF-2 subfamily.

It localises to the cytoplasm. Its function is as follows. Catalyzes the GTP-dependent ribosomal translocation step during translation elongation. During this step, the ribosome changes from the pre-translocational (PRE) to the post-translocational (POST) state as the newly formed A-site-bound peptidyl-tRNA and P-site-bound deacylated tRNA move to the P and E sites, respectively. Catalyzes the coordinated movement of the two tRNA molecules, the mRNA and conformational changes in the ribosome. This is Elongation factor G from Streptococcus uberis (strain ATCC BAA-854 / 0140J).